The primary structure comprises 371 residues: Putative transport protein YtvI (371 aa).

9 helical membrane-spanning segments follow: residues 6-26 (ITIF…IAAA), 30-50 (FPLT…HPVV), 65-85 (VLGV…ILVA), 168-188 (FFAL…ATFF), 225-245 (GFIK…FIGL), 256-276 (IAFL…SVFV), 283-303 (SITG…VVLI), 312-332 (ILSK…FAGF), and 334-354 (LFGF…QAFI).

This sequence belongs to the autoinducer-2 exporter (AI-2E) (TC 2.A.86) family.

The protein resides in the cell membrane. In Bacillus subtilis (strain 168), this protein is Putative transport protein YtvI (ytvI).